Reading from the N-terminus, the 419-residue chain is Acyl-coenzyme A thioesterase 6 (419 aa).

Residues S232, D324, and H358 each act as charge relay system in the active site. Positions 417–419 match the Peroxisome targeting signal motif; sequence SKL.

Belongs to the C/M/P thioester hydrolase family. In terms of tissue distribution, highly expressed in white adipose tissue. Detected at lower levels in kidney, liver, brown adipose tissue and brain.

The protein resides in the peroxisome. The enzyme catalyses pristanoyl-CoA + H2O = 2,6,10,14-tetramethylpentadecanoate + CoA + H(+). The catalysed reaction is phytanoyl-CoA + H2O = 3,7,11,15-tetramethylhexadecanoate + CoA + H(+). Its pathway is lipid metabolism; fatty acid metabolism. Its function is as follows. Catalyzes the hydrolysis of acyl-CoAs into free fatty acids and coenzyme A (CoASH), regulating their respective intracellular levels. Catalyzes the hydrolysis of phytanoyl-CoA and pristanoyl-CoA, two methyl-branched fatty acids derived from phytol, that enter the body via the diet. The protein is Acyl-coenzyme A thioesterase 6 of Mus musculus (Mouse).